Here is a 989-residue protein sequence, read N- to C-terminus: Phosphoenolpyruvate carboxylase (989 aa).

Catalysis depends on residues histidine 175 and lysine 630.

The protein belongs to the PEPCase type 1 family. Requires Mg(2+) as cofactor.

It carries out the reaction oxaloacetate + phosphate = phosphoenolpyruvate + hydrogencarbonate. Forms oxaloacetate, a four-carbon dicarboxylic acid source for the tricarboxylic acid cycle. The polypeptide is Phosphoenolpyruvate carboxylase (Prochlorococcus marinus (strain MIT 9301)).